A 95-amino-acid chain; its full sequence is Protein FAM240C (95 aa).

A disordered region spans residues 68-95 (KMLQGPGRCPDRVPEATESLHTKDKKAA). A compositionally biased stretch (basic and acidic residues) spans 76-95 (CPDRVPEATESLHTKDKKAA).

It belongs to the FAM240 family.

This chain is Protein FAM240C (FAM240C), found in Homo sapiens (Human).